A 409-amino-acid polypeptide reads, in one-letter code: S-adenosylmethionine synthase (409 aa).

141 to 146 (GQGSAD) contacts ATP.

Belongs to the AdoMet synthase 2 family. Mg(2+) serves as cofactor.

It catalyses the reaction L-methionine + ATP + H2O = S-adenosyl-L-methionine + phosphate + diphosphate. It functions in the pathway amino-acid biosynthesis; S-adenosyl-L-methionine biosynthesis; S-adenosyl-L-methionine from L-methionine: step 1/1. Functionally, catalyzes the formation of S-adenosylmethionine from methionine and ATP. The polypeptide is S-adenosylmethionine synthase (Hyperthermus butylicus (strain DSM 5456 / JCM 9403 / PLM1-5)).